A 149-amino-acid polypeptide reads, in one-letter code: MVELHDLQPHWGATKEKKRVGRGIGSGHGKTAGRGHKGQKSRSGDRKMPPYFEGGQTPLYMRIPKRGFKNPTRKEYTPVNVGVIDKLFEDGMEITPEVLASKGLCDEKDRVKILGDGELTKKFVIKAHAFSKSAKEKIEKAGGKWEIIS.

Positions 1 to 64 are disordered; the sequence is MVELHDLQPH…GQTPLYMRIP (64 aa). Residues 31–40 are compositionally biased toward basic residues; sequence TAGRGHKGQK.

It belongs to the universal ribosomal protein uL15 family. In terms of assembly, part of the 50S ribosomal subunit.

Functionally, binds to the 23S rRNA. The polypeptide is Large ribosomal subunit protein uL15 (Aquifex aeolicus (strain VF5)).